We begin with the raw amino-acid sequence, 456 residues long: Transcription factor bHLH62 (456 aa).

Polar residues predominate over residues 159 to 185 (RTNSPFPINNEPPITTNEKMPRVSSSP). Positions 159–254 (RTNSPFPINN…KTKSIDPYKD (96 aa)) are disordered. Basic and acidic residues predominate over residues 223-254 (KEIEEKEDSDPKRCKKSEENGDKTKSIDPYKD). Residues 264–314 (QATDSHSLAERVRREKISERMKLLQDLVPGCNKVTGKALMLDEIINYVQSL) form the bHLH domain.

As to quaternary structure, homodimer. Expressed constitutively in roots, leaves, stems, and flowers.

It localises to the nucleus. The sequence is that of Transcription factor bHLH62 (BHLH62) from Arabidopsis thaliana (Mouse-ear cress).